An 833-amino-acid chain; its full sequence is Leucine--tRNA ligase (833 aa).

Positions 41–52 match the 'HIGH' region motif; sequence PYPSGAGLHVGH. Residues 610–614 carry the 'KMSKS' region motif; the sequence is KMSKS. Lysine 613 serves as a coordination point for ATP.

This sequence belongs to the class-I aminoacyl-tRNA synthetase family.

It localises to the cytoplasm. It carries out the reaction tRNA(Leu) + L-leucine + ATP = L-leucyl-tRNA(Leu) + AMP + diphosphate. This is Leucine--tRNA ligase from Streptococcus sanguinis (strain SK36).